The primary structure comprises 400 residues: 2'-5'-oligoadenylate synthase 1 (400 aa).

The segment at 13-60 is interaction with dsRNA; that stretch reads DKFIEDYLLPDTCFRMQINHAIDIICGFLKERCFRGSSYPVCVSKVVK. ATP is bound at residue serine 63. Residues aspartate 75, aspartate 77, and aspartate 148 each coordinate Mg(2+). The interaction with dsRNA stretch occupies residues 200–210; sequence QRPTKLKSLIR. ATP contacts are provided by arginine 210, lysine 213, and glutamine 229. Cysteine 397 carries S-geranylgeranyl cysteine lipidation.

Belongs to the 2-5A synthase family. In terms of assembly, monomer. Homotetramer. It depends on Mg(2+) as a cofactor. Prenylated at C-terminal. C-terminal prenylation is necessary to initiate a block to SARS-CoV-2 and is associated with protection from severe COVID-1. The prenylated form is targeted to perinuclear structures rich in viral dsRNA, whereas the non-prenylated form is diffusely localized and unable to initiate a detectable block to SARS-CoV-2 replication. C-terminal prenylation is also necessary to initiate a block to cardiovirus EMCV. Post-translationally, not prenylated at C-terminal. The non-prenylated form is diffusely localized and unable to initiate a detectable block to SARS-CoV-2 replication. In terms of tissue distribution, expressed in lungs.

It localises to the cytoplasm. It is found in the mitochondrion. Its subcellular location is the nucleus. The protein localises to the microsome. The protein resides in the endoplasmic reticulum. It localises to the secreted. The catalysed reaction is 3 ATP = 5'-triphosphoadenylyl-(2'-&gt;5')-adenylyl-(2'-&gt;5')-adenosine + 2 diphosphate. Its activity is regulated as follows. Produced as a latent enzyme which is activated by dsRNA generated during the course of viral infection. The dsRNA activator must be at least 15 nucleotides long, and no modification of the 2'-hydroxyl group is tolerated. ssRNA or dsDNA do not act as activators. In terms of biological role, interferon-induced, dsRNA-activated antiviral enzyme which plays a critical role in cellular innate antiviral response. In addition, it may also play a role in other cellular processes such as apoptosis, cell growth, differentiation and gene regulation. Synthesizes higher oligomers of 2'-5'-oligoadenylates (2-5A) from ATP which then bind to the inactive monomeric form of ribonuclease L (RNase L) leading to its dimerization and subsequent activation. Activation of RNase L leads to degradation of cellular as well as viral RNA, resulting in the inhibition of protein synthesis, thus terminating viral replication. Can mediate the antiviral effect via the classical RNase L-dependent pathway or an alternative antiviral pathway independent of RNase L. The secreted form displays antiviral effect against vesicular stomatitis virus (VSV), herpes simplex virus type 2 (HSV-2), and encephalomyocarditis virus (EMCV) and stimulates the alternative antiviral pathway independent of RNase L. When prenylated at C-terminal, acts as a double-stranded RNA (dsRNA) sensor specifically targeted to membranous replicative organelles in SARS coronavirus-2/SARS-CoV-2 infected cells where it binds to dsRNA structures in the SARS-CoV-2 5'-UTR and initiates a potent block to SARS-CoV-2 replication. Recognizes short stretches of dsRNA and activates RNase L. The binding is remarkably specific, with two conserved stem loops in the SARS-CoV-2 5'- untranslated region (UTR) constituting the principal viral target. The same mechanism is necessary to initiate a block to cardiovirus EMCV. Functionally, not prenylated at C-terminal, is diffusely localized and unable to initiate a detectable block to SARS-CoV-2 replication. The chain is 2'-5'-oligoadenylate synthase 1 (OAS1) from Homo sapiens (Human).